The chain runs to 38 residues: Photosystem II reaction center protein L (38 aa).

Residues 17 to 37 (SLFWGLLLIFVLAVLFSSYFF) form a helical membrane-spanning segment.

It belongs to the PsbL family. PSII is composed of 1 copy each of membrane proteins PsbA, PsbB, PsbC, PsbD, PsbE, PsbF, PsbH, PsbI, PsbJ, PsbK, PsbL, PsbM, PsbT, PsbX, PsbY, PsbZ, Psb30/Ycf12, at least 3 peripheral proteins of the oxygen-evolving complex and a large number of cofactors. It forms dimeric complexes.

The protein localises to the plastid. It localises to the chloroplast thylakoid membrane. In terms of biological role, one of the components of the core complex of photosystem II (PSII). PSII is a light-driven water:plastoquinone oxidoreductase that uses light energy to abstract electrons from H(2)O, generating O(2) and a proton gradient subsequently used for ATP formation. It consists of a core antenna complex that captures photons, and an electron transfer chain that converts photonic excitation into a charge separation. This subunit is found at the monomer-monomer interface and is required for correct PSII assembly and/or dimerization. The chain is Photosystem II reaction center protein L from Rhodomonas salina (Cryptomonas salina).